The following is a 323-amino-acid chain: Mycothiol acetyltransferase (323 aa).

Glutamate 44 contributes to the 1D-myo-inositol 2-(L-cysteinylamino)-2-deoxy-alpha-D-glucopyranoside binding site. 2 N-acetyltransferase domains span residues 77 to 176 (GQDL…VSLR) and 173 to 323 (VSLR…VKEG). 98-100 (IAV) serves as a coordination point for acetyl-CoA. 1D-myo-inositol 2-(L-cysteinylamino)-2-deoxy-alpha-D-glucopyranoside-binding residues include glutamate 200, lysine 240, and glutamate 253. Residues 257-259 (VGV) and 264-270 (QGSGLGK) each bind acetyl-CoA. Tyrosine 291 contributes to the 1D-myo-inositol 2-(L-cysteinylamino)-2-deoxy-alpha-D-glucopyranoside binding site.

This sequence belongs to the acetyltransferase family. MshD subfamily. As to quaternary structure, monomer.

It carries out the reaction 1D-myo-inositol 2-(L-cysteinylamino)-2-deoxy-alpha-D-glucopyranoside + acetyl-CoA = mycothiol + CoA + H(+). Functionally, catalyzes the transfer of acetyl from acetyl-CoA to desacetylmycothiol (Cys-GlcN-Ins) to form mycothiol. This Pseudarthrobacter chlorophenolicus (strain ATCC 700700 / DSM 12829 / CIP 107037 / JCM 12360 / KCTC 9906 / NCIMB 13794 / A6) (Arthrobacter chlorophenolicus) protein is Mycothiol acetyltransferase.